Here is a 116-residue protein sequence, read N- to C-terminus: Aspartate 1-decarboxylase (116 aa).

The active-site Schiff-base intermediate with substrate; via pyruvic acid is S25. S25 bears the Pyruvic acid (Ser) mark. T57 serves as a coordination point for substrate. The Proton donor role is filled by Y58. Position 73–75 (73–75 (GAA)) interacts with substrate.

It belongs to the PanD family. In terms of assembly, heterooctamer of four alpha and four beta subunits. The cofactor is pyruvate. In terms of processing, is synthesized initially as an inactive proenzyme, which is activated by self-cleavage at a specific serine bond to produce a beta-subunit with a hydroxyl group at its C-terminus and an alpha-subunit with a pyruvoyl group at its N-terminus.

It localises to the cytoplasm. It catalyses the reaction L-aspartate + H(+) = beta-alanine + CO2. Its pathway is cofactor biosynthesis; (R)-pantothenate biosynthesis; beta-alanine from L-aspartate: step 1/1. Catalyzes the pyruvoyl-dependent decarboxylation of aspartate to produce beta-alanine. In Syntrophus aciditrophicus (strain SB), this protein is Aspartate 1-decarboxylase.